A 1423-amino-acid chain; its full sequence is Guanine nucleotide exchange factor subunit RIC1 (1423 aa).

2 WD repeats span residues 64–103 (TQFGSYKQAEWRPDSTMIAVSTANGYILFFHITSTRGDKY) and 304–343 (NKTGAVKLMRWSPDNSVVIVTWEYGGLSLWSVFGAQLICT). Residues 437–448 (ASQTQNPRSSST) are compositionally biased toward polar residues. The disordered stretch occupies residues 437-463 (ASQTQNPRSSSTHSEHKPSREKSPFAD). Residues 449–460 (HSEHKPSREKSP) are compositionally biased toward basic and acidic residues. Phosphothreonine is present on residues T992 and T996. Residues S1015, S1017, S1019, S1037, and S1172 each carry the phosphoserine modification. The tract at residues 1355–1423 (PDAFQPITMG…QDGTYDCSVS (69 aa)) is disordered. Over residues 1379 to 1397 (GSSSHGSIPQGEVGSSNMV) the composition is skewed to polar residues. Over residues 1404-1413 (TAQAEEEEPF) the composition is skewed to acidic residues.

The protein belongs to the RIC1 family. In terms of assembly, forms a complex with RGP1; the interaction enhances RAB6A GTPase activity. Interacts (via central domain) with RGP1. Interacts with RAB6A; the interaction is direct with a preference for RAB6A-GDP. Interacts (via C-terminus domain) with RAB33B; the interaction is direct with a preference for RAB33B-GTP. Interacts with GJA1. In terms of tissue distribution, present in kidney and various cell lines (at protein level). Widely expressed at low level.

The protein resides in the cytoplasm. The protein localises to the cytosol. Its subcellular location is the membrane. Its function is as follows. The RIC1-RGP1 complex acts as a guanine nucleotide exchange factor (GEF), which activates RAB6A by exchanging bound GDP for free GTP, and may thereby be required for efficient fusion of endosome-derived vesicles with the Golgi compartment. The RIC1-RGP1 complex participates in the recycling of mannose-6-phosphate receptors. Required for phosphorylation and localization of GJA1. Is a regulator of procollagen transport and secretion, and is required for correct cartilage morphogenesis and development of the craniofacial skeleton. This chain is Guanine nucleotide exchange factor subunit RIC1, found in Homo sapiens (Human).